A 275-amino-acid chain; its full sequence is Large ribosomal subunit protein uL2 (275 aa).

A disordered region spans residues Gly-222 to Lys-275.

Belongs to the universal ribosomal protein uL2 family. As to quaternary structure, part of the 50S ribosomal subunit. Forms a bridge to the 30S subunit in the 70S ribosome.

In terms of biological role, one of the primary rRNA binding proteins. Required for association of the 30S and 50S subunits to form the 70S ribosome, for tRNA binding and peptide bond formation. It has been suggested to have peptidyltransferase activity; this is somewhat controversial. Makes several contacts with the 16S rRNA in the 70S ribosome. The sequence is that of Large ribosomal subunit protein uL2 from Desulforamulus reducens (strain ATCC BAA-1160 / DSM 100696 / MI-1) (Desulfotomaculum reducens).